The sequence spans 412 residues: Peptidase T (412 aa).

Histidine 84 serves as a coordination point for Zn(2+). The active site involves aspartate 86. Residue aspartate 146 participates in Zn(2+) binding. The active-site Proton acceptor is glutamate 179. Residues glutamate 180, aspartate 202, and histidine 385 each coordinate Zn(2+).

It belongs to the peptidase M20B family. It depends on Zn(2+) as a cofactor.

The protein resides in the cytoplasm. The catalysed reaction is Release of the N-terminal residue from a tripeptide.. In terms of biological role, cleaves the N-terminal amino acid of tripeptides. In Haemophilus influenzae (strain PittEE), this protein is Peptidase T.